The following is an 89-amino-acid chain: Luqin-like RYamide peptides lury-1 (89 aa).

The N-terminal stretch at 1-19 is a signal peptide; it reads MLTRVPVLILAVIVMLALC. Residues 20-26 constitute a propeptide that is removed on maturation; the sequence is QEPEKPE. Tyrosine amide is present on residues Tyr-35 and Tyr-43. Residues 47 to 89 constitute a propeptide that is removed on maturation; sequence SGNLMESSQNSLTEESSDVVCQLIDGKYICLPVDAVRFRPFFL.

As to expression, expressed in the M1 and M2 pharyngeal neurons from where the LURY-1-1 and LURY-1-2 peptides are secreted.

It is found in the secreted. Functionally, acts as a ligand for the npr-22 receptor and controls food-related processes including feeding, lifespan, egg-laying and roaming behavior. Secreted in the presence of food, leading to reduced feeding and roaming behavior and increased egg laying and lifespan. Activity may be latent under normal conditions but induced under conditions that cause hyperactivation of the pharynx such as abrupt refeeding after starvation. This is Luqin-like RYamide peptides lury-1 from Caenorhabditis elegans.